Reading from the N-terminus, the 113-residue chain is U11-theraphotoxin-Hhn1a (113 aa).

Positions Met-1–Ala-21 are cleaved as a signal peptide. The propeptide occupies Asp-22–Arg-74. Over residues Leu-60 to Asn-69 the composition is skewed to basic and acidic residues. Residues Leu-60–Asp-83 form a disordered region. 3 disulfides stabilise this stretch: Cys-75-Cys-90, Cys-82-Cys-95, and Cys-89-Cys-110.

It belongs to the neurotoxin 14 (magi-1) family. 01 (HNTX-16) subfamily. Expressed by the venom gland.

The protein resides in the secreted. Functionally, probable ion channel inhibitor. The sequence is that of U11-theraphotoxin-Hhn1a from Cyriopagopus hainanus (Chinese bird spider).